A 288-amino-acid polypeptide reads, in one-letter code: Protoheme IX farnesyltransferase (288 aa).

9 helical membrane passes run Val-16–Thr-36, Leu-37–Ala-57, Val-88–Phe-108, Tyr-111–Leu-131, Trp-138–Val-158, Phe-162–Trp-182, Ala-210–Phe-230, Thr-236–Val-256, and Leu-265–Phe-285.

It belongs to the UbiA prenyltransferase family. Protoheme IX farnesyltransferase subfamily.

It is found in the cell membrane. The enzyme catalyses heme b + (2E,6E)-farnesyl diphosphate + H2O = Fe(II)-heme o + diphosphate. The protein operates within porphyrin-containing compound metabolism; heme O biosynthesis; heme O from protoheme: step 1/1. In terms of biological role, converts heme B (protoheme IX) to heme O by substitution of the vinyl group on carbon 2 of heme B porphyrin ring with a hydroxyethyl farnesyl side group. This chain is Protoheme IX farnesyltransferase, found in Thermoplasma volcanium (strain ATCC 51530 / DSM 4299 / JCM 9571 / NBRC 15438 / GSS1).